Consider the following 399-residue polypeptide: Phosphoglycerate kinase (399 aa).

Substrate-binding positions include 22 to 24, arginine 38, 61 to 64, arginine 119, and arginine 152; these read DFN and HLGR. Residues lysine 205, glycine 296, glutamate 327, and 353-356 contribute to the ATP site; that span reads GGDT.

The protein belongs to the phosphoglycerate kinase family. In terms of assembly, monomer.

It localises to the cytoplasm. The catalysed reaction is (2R)-3-phosphoglycerate + ATP = (2R)-3-phospho-glyceroyl phosphate + ADP. The protein operates within carbohydrate degradation; glycolysis; pyruvate from D-glyceraldehyde 3-phosphate: step 2/5. The chain is Phosphoglycerate kinase from Nitratiruptor sp. (strain SB155-2).